A 63-amino-acid polypeptide reads, in one-letter code: Odorranain-B1 (63 aa).

The first 22 residues, 1–22 (MFTTKKPLLLLFFLGIISLSVC), serve as a signal peptide directing secretion. Residues 23–41 (EQERDADEEDGGEVTEEEV) constitute a propeptide that is removed on maturation.

The protein belongs to the frog skin active peptide (FSAP) family. Brevinin subfamily. In terms of tissue distribution, expressed by the skin glands.

It localises to the secreted. In Odorrana hainanensis (Odor frog), this protein is Odorranain-B1.